The following is a 424-amino-acid chain: Putative chloroquine resistance transporter (424 aa).

Over 1-57 the chain is Cytoplasmic; the sequence is MKILKKKKKGNQQIVPDERYRELDSHAPNENEIADEAPMSRKILYYLKLVYHEIREN. A helical transmembrane segment spans residues 58 to 78; sequence ITIYLLIILYLCVCVMNKIMA. The Vacuolar portion of the chain corresponds to 79 to 89; it reads KRTLKKIGNYS. N87 carries N-linked (GlcNAc...) asparagine glycosylation. Residues 90 to 110 form a helical membrane-spanning segment; that stretch reads FVTSETHNTICMVVFFSLYFI. The Cytoplasmic segment spans residues 111 to 124; it reads FGRRVTSAKERHQN. Residues 125–145 form a helical membrane-spanning segment; it reads FGLQFLLISLLDACSVIIAFI. Topologically, residues 146 to 153 are vacuolar; it reads GLTRTTGN. The helical transmembrane segment at 154-174 threads the bilayer; that stretch reads IQSFVMQLSIPINMFFCFLIL. Over 175–179 the chain is Cytoplasmic; it reads RYRYH. Residues 180 to 200 form a helical membrane-spanning segment; it reads LFNYVGASIIVLTIAIVEFIL. Residues 201–208 are Vacuolar-facing; sequence SFETQEEN. Residues 209 to 229 traverse the membrane as a helical segment; it reads SIVFNLVLIASLIPMSFSNMT. Residues 230–246 lie on the Cytoplasmic side of the membrane; it reads REIVFKKYKINILRLNA. The helical transmembrane segment at 247-267 threads the bilayer; it reads VVSFFQIFTSCLMLPMYTLPF. Over 268–316 the chain is Vacuolar; it reads LKQINLPFSEIGTNIKNGFRCLILGQNTIVENCGLGMAKMCDDCEGAWK. 2 disulfides stabilise this stretch: C288–C311 and C300–C308. A helical transmembrane segment spans residues 317–337; the sequence is TFLAYSFFNICDNLITSFIID. Topologically, residues 338-345 are cytoplasmic; sequence KFSTMTYT. Residues 346–366 traverse the membrane as a helical segment; the sequence is IVSCIQGPAIAIAYYFKFLAG. Residues 367 to 376 lie on the Vacuolar side of the membrane; the sequence is DAVMKPRVLD. Residues 377–397 form a helical membrane-spanning segment; the sequence is FVTLFGYLFGSIIYRVGNIIL. Residues 398–424 lie on the Cytoplasmic side of the membrane; it reads EKKKMMEAGNDDDSEGELTNAESIITQ.

This sequence belongs to the CRT-like transporter family.

The protein localises to the vacuole membrane. Functionally, nutrient transporter. Involved in maintaining the osmotic homeostasis of the digestive vacuole. The sequence is that of Putative chloroquine resistance transporter from Plasmodium knowlesi.